Here is a 551-residue protein sequence, read N- to C-terminus: 2-(3-amino-3-carboxypropyl)histidine synthase subunit 2 (551 aa).

The [4Fe-4S] cluster site is built by Cys-116, Cys-137, and Cys-371.

This sequence belongs to the DPH1/DPH2 family. DPH2 subfamily. Component of the 2-(3-amino-3-carboxypropyl)histidine synthase complex composed of DPH1, DPH2, DPH3 and a NADH-dependent reductase, predominantly CBR1. The cofactor is [4Fe-4S] cluster.

It localises to the cytoplasm. Its pathway is protein modification; peptidyl-diphthamide biosynthesis. Functionally, required for the first step of diphthamide biosynthesis, a post-translational modification of histidine which occurs in elongation factor 2. DPH1 and DPH2 transfer a 3-amino-3-carboxypropyl (ACP) group from S-adenosyl-L-methionine (SAM) to a histidine residue, the reaction is assisted by a reduction system comprising DPH3 and a NADH-dependent reductase, predominantly CBR1. Facilitates the reduction of the catalytic iron-sulfur cluster found in the DPH1 subunit. The sequence is that of 2-(3-amino-3-carboxypropyl)histidine synthase subunit 2 (DPH2) from Candida glabrata (strain ATCC 2001 / BCRC 20586 / JCM 3761 / NBRC 0622 / NRRL Y-65 / CBS 138) (Yeast).